The following is a 511-amino-acid chain: RNA polymerase principal sigma factor HrdB (511 aa).

Positions Ser72–Glu186 are disordered. Residues Arg78–Ala93 are compositionally biased toward basic residues. Residues Thr94–Ala121 are compositionally biased toward low complexity. A compositionally biased stretch (basic residues) spans Ala132–Thr158. Residues Thr211–Arg347 form a binds RNA polymerase-binding protein RbpA region. Positions Leu278–Thr348 are sigma-70 factor domain-2. The Interaction with polymerase core subunit RpoC signature appears at Asp302–Gln305. The sigma-70 factor domain-3 stretch occupies residues Glu357–Ala433. A sigma-70 factor domain-4 region spans residues Val446–His499. The H-T-H motif DNA-binding region spans Leu472–Ser491.

The protein belongs to the sigma-70 factor family. Homotrimer (Potential). interacts transiently with the RNA polymerase core complex. Interacts with RNA polymerase-binding protein RbpA via its sigma-2 region (residues 211-347) in a free form.

Functionally, sigma factors are initiation factors that promote the attachment of RNA polymerase to specific initiation sites and are then released. This sigma factor is the primary sigma factor during exponential growth. Its activity is stimulated by RbpA. This is RNA polymerase principal sigma factor HrdB (hrdB) from Streptomyces coelicolor (strain ATCC BAA-471 / A3(2) / M145).